The primary structure comprises 452 residues: MRSEKEQRTGSRERGSVEIQFRDCQDNAAVNPKHKEEKKEIFSKVVIRRLPPSLSKDQLQEHLSPLPSFDYFEFFPADQSLYPHLFSRAYINFKNPEDIIIFRDRFDGYVFIDNKGQEYPAVVEFAPFQKVSKKKLKKKDAKAGTIEEDPEYRRFLENYSCDEEKSMANPETLLGEIEAKTRELIAKRTTPLLEYIKNKKLEKQRIREEKREERRRRELEKKRQREEEKRKRREEERQKRKEAEKQKKLSEKEIKIKLLKKCDRDDDVDSDRLKDKGDSGETEKNRWEKPGGHTKSKDSKDNRSQMENDKEQREGHGRRQRDKDHRGRDEERKRQRHHYEFDKFMRRKEETKWGKGYCQDRAKKDQHHGYSYCPETGDKLGKEDREDMGSRKERIRNKDRPAMQLYQPGARNRKRMGSGNKTFDFPPISPEHAGEHCYKTVIGTGSEKSADE.

2 stretches are compositionally biased toward basic and acidic residues: residues 205–363 and 376–401; these read RIRE…DRAK and TGDK…KDRP. The interval 205–452 is disordered; sequence RIREEKREER…GTGSEKSADE (248 aa).

It belongs to the RENT3 family.

It localises to the nucleus. The protein localises to the cytoplasm. Functionally, involved in nonsense-mediated decay (NMD) of mRNAs containing premature stop codons by associating with the nuclear exon junction complex (EJC) and serving as link between the EJC core and NMD machinery. Recruits UPF2 at the cytoplasmic side of the nuclear envelope and the subsequent formation of an UPF1-UPF2-UPF3 surveillance complex (including UPF1 bound to release factors at the stalled ribosome) is believed to activate NMD. Binds spliced mRNA upstream of exon-exon junctions. The chain is Regulator of nonsense transcripts 3A from Danio rerio (Zebrafish).